The chain runs to 305 residues: Ribosomal RNA small subunit methyltransferase H (305 aa).

S-adenosyl-L-methionine contacts are provided by residues 33 to 35, aspartate 51, phenylalanine 78, aspartate 96, and glutamine 103; that span reads GGY.

The protein belongs to the methyltransferase superfamily. RsmH family.

It is found in the cytoplasm. It carries out the reaction cytidine(1402) in 16S rRNA + S-adenosyl-L-methionine = N(4)-methylcytidine(1402) in 16S rRNA + S-adenosyl-L-homocysteine + H(+). Functionally, specifically methylates the N4 position of cytidine in position 1402 (C1402) of 16S rRNA. This chain is Ribosomal RNA small subunit methyltransferase H, found in Rickettsia bellii (strain RML369-C).